The chain runs to 440 residues: MFLAQEIIRKKRDGHALSDEEIRFFINGIRDNTISEGQIAALAMTIFFHDMTMPERVSLTMAMRDSGTVLDWKSLHLNGPIVDKHSTGGVGDVTSLMLGPMVAACGGYIPMISGRGLGHTGGTLDKLESIPGFDIFPDDNRFREIIKDVGVAIIGQTSSLAPADKRFYATRDITATVDSIPLITASILAKKLAEGLDALVMDVKVGSGAFMPTYELSEALAEAIVGVANGAGVRTTALLTDMNQVLASSAGNAVEVREAVQFLTGEYRNPRLFDVTMALCVEMLISGKLAKDDAEARAKLQAVLDNGKAAEVFGRMVAAQKGPTDFVENYAKYLPTAMLTKAVYADTEGFVSEMDTRALGMAVVAMGGGRRQASDTIDYSVGFTDMARLGDQVDGQRPLAVIHAKDENSWQDAAKAVKAAIKLADKAPESTPTVYRRISE.

The protein belongs to the thymidine/pyrimidine-nucleoside phosphorylase family. In terms of assembly, homodimer.

The enzyme catalyses thymidine + phosphate = 2-deoxy-alpha-D-ribose 1-phosphate + thymine. It functions in the pathway pyrimidine metabolism; dTMP biosynthesis via salvage pathway; dTMP from thymine: step 1/2. The enzymes which catalyze the reversible phosphorolysis of pyrimidine nucleosides are involved in the degradation of these compounds and in their utilization as carbon and energy sources, or in the rescue of pyrimidine bases for nucleotide synthesis. The polypeptide is Thymidine phosphorylase (Escherichia coli (strain 55989 / EAEC)).